The chain runs to 648 residues: Transmembrane 9 superfamily member 8 (648 aa).

Positions 1–33 (MAMEFLRSSRRILESSGCAIALIFLLFIHGAHS) are cleaved as a signal peptide. The Lumenal portion of the chain corresponds to 34–285 (FYLPGVAPQD…YLLMSDNQIH (252 aa)). A helical transmembrane segment spans residues 286-306 (WFSIVNSLMIVLFLSGMVAMI). Topologically, residues 307–355 (MLRTLYRDISRYNELETQEEAQEETGWKLVHGDVFRLPTNSDLLCVYVG) are cytoplasmic. Residues 356 to 376 (TGVQCLGMVFVTMIFAMLGFL) form a helical membrane-spanning segment. Over 377–381 (SPSNR) the chain is Lumenal. The chain crosses the membrane as a helical span at residues 382–402 (GGLMTAMLLLWVFMGLFAGYA). Residues 403-422 (SSRLYKMFKGTEWKRIAFRT) are Cytoplasmic-facing. The helical transmembrane segment at 423-443 (AFLFPAVVSAIFFVLNALIWG) threads the bilayer. At 444 to 455 (QKSSGAVPFGTM) the chain is on the lumenal side. A helical transmembrane segment spans residues 456–476 (FALIFLWFGISVPLVFVGGYI). At 477 to 506 (GFKKPAADDPVKTNKIPRQIPEQAWYMNPV) the chain is on the cytoplasmic side. The chain crosses the membrane as a helical span at residues 507-527 (FSILIGGILPFGAVFIELFFI). The Lumenal portion of the chain corresponds to 528 to 538 (LTSIWLNQFYY). Residues 539–559 (IFGFLFLVFVILIVTCAEITV) traverse the membrane as a helical segment. Over 560-577 (VLCYFQLCSEDYLWWWRS) the chain is Cytoplasmic. A helical transmembrane segment spans residues 578–598 (YLTSGSSALYLFLYATFYFFT). Over 599–604 (KLQITK) the chain is Lumenal. The chain crosses the membrane as a helical span at residues 605 to 625 (LVSAMLYFGYMLIASYAFFVL). The Cytoplasmic portion of the chain corresponds to 626–648 (TGTIGFYACLWFTRLIYSSVKID). Positions 637–642 (FTRLIY) match the Endoplasmic reticulum export signal motif. The Golgi retention signal motif lies at 646–648 (KID).

Belongs to the nonaspanin (TM9SF) (TC 9.A.2) family.

Its subcellular location is the endosome membrane. The protein resides in the golgi apparatus membrane. The sequence is that of Transmembrane 9 superfamily member 8 from Arabidopsis thaliana (Mouse-ear cress).